A 361-amino-acid chain; its full sequence is Mitogen-activated protein kinase 14 (361 aa).

The region spanning 32–316 (YVPIKPIGRG…VSDALLHPYM (285 aa)) is the Protein kinase domain. Residues 38–46 (IGRGAYGVV) and Lys61 each bind ATP. Asp158 serves as the catalytic Proton acceptor. Phosphothreonine is present on Thr188. A TXY motif is present at residues 188–190 (TEY). Position 190 is a phosphotyrosine (Tyr190). A Phosphothreonine modification is found at Thr193.

This sequence belongs to the protein kinase superfamily. CMGC Ser/Thr protein kinase family. MAP kinase subfamily. Interacts with MKK3. In terms of processing, dually phosphorylated on Thr-188 and Tyr-190, which activates the enzyme.

It catalyses the reaction L-seryl-[protein] + ATP = O-phospho-L-seryl-[protein] + ADP + H(+). The catalysed reaction is L-threonyl-[protein] + ATP = O-phospho-L-threonyl-[protein] + ADP + H(+). Its activity is regulated as follows. Activated by threonine and tyrosine phosphorylation. The sequence is that of Mitogen-activated protein kinase 14 (MPK14) from Arabidopsis thaliana (Mouse-ear cress).